The chain runs to 267 residues: Probable 6-oxopurine nucleoside phosphorylase (267 aa).

Phosphate-binding positions include Ser-10, 50 to 51 (RH), and 83 to 84 (SA). Met-188 is a substrate binding site. Thr-189 contributes to the phosphate binding site. Residue 212-214 (NYA) coordinates substrate.

It belongs to the PNP/MTAP phosphorylase family. MTAP subfamily. Homohexamer. Dimer of a homotrimer.

It carries out the reaction a purine D-ribonucleoside + phosphate = a purine nucleobase + alpha-D-ribose 1-phosphate. It catalyses the reaction guanosine + phosphate = alpha-D-ribose 1-phosphate + guanine. The catalysed reaction is inosine + phosphate = alpha-D-ribose 1-phosphate + hypoxanthine. Its pathway is purine metabolism; purine nucleoside salvage. In terms of biological role, purine nucleoside phosphorylase which is highly specific for 6-oxopurine nucleosides. Cleaves guanosine or inosine to respective bases and sugar-1-phosphate molecules. Involved in purine salvage. In Thermococcus kodakarensis (strain ATCC BAA-918 / JCM 12380 / KOD1) (Pyrococcus kodakaraensis (strain KOD1)), this protein is Probable 6-oxopurine nucleoside phosphorylase.